We begin with the raw amino-acid sequence, 442 residues long: tRNA(Ile)-lysidine synthase (442 aa).

27-32 (SGGLDS) is an ATP binding site.

The protein belongs to the tRNA(Ile)-lysidine synthase family.

Its subcellular location is the cytoplasm. It carries out the reaction cytidine(34) in tRNA(Ile2) + L-lysine + ATP = lysidine(34) in tRNA(Ile2) + AMP + diphosphate + H(+). In terms of biological role, ligates lysine onto the cytidine present at position 34 of the AUA codon-specific tRNA(Ile) that contains the anticodon CAU, in an ATP-dependent manner. Cytidine is converted to lysidine, thus changing the amino acid specificity of the tRNA from methionine to isoleucine. The sequence is that of tRNA(Ile)-lysidine synthase from Photorhabdus laumondii subsp. laumondii (strain DSM 15139 / CIP 105565 / TT01) (Photorhabdus luminescens subsp. laumondii).